We begin with the raw amino-acid sequence, 406 residues long: MSEFKSYDVVIIGSGPAGSLCGIECRKKGLSVLCIEKDEFPRFHIGESLTGNAGQIIRDLGLAEEMDAAGFPDKPGVNVIGSLSKNEFFIPILAPTWQVKRSDFDNMLKRKALEHGVEYQQGLVKDVIKHDGKVVGAIYKADDMEHQVRSKVLVDASGQNTFLSRKGIAGKREIEFFSQQIASFAHYKGVERDLPPFSTNTTILYSKQYHWSWIIPISPDTDSLGIVIPKDLYYKECKNPDDAIEWGMENISPEIRRRFQNAERIGDSQSMADFSYRIEPFVGDGWLCIGDAHRFLDPIFSYGVSFAMKEGIRAADAIKQAIDGNDWKTPFYAYRDWSNGGQQIAADLIRYFWIYPIFFGYQMQNPDLRDEVIRLLGGCCFDCEGWKAPTIFRNAIEEYDRKQMVG.

Positions 17, 36, 42, 44, 45, 48, 101, 124, 291, and 304 each coordinate FAD.

This sequence belongs to the flavin-dependent halogenase family.

It carries out the reaction (1H-pyrrole-2-carbonyl)-[peptidyl-carrier protein] + 3 bromide + 3 FADH2 + 3 O2 = (3,4,5-tribromo-1H-pyrrole-2-carbonyl)-[peptidyl-carrier protein] + 3 FAD + 6 H2O. The catalysed reaction is (1H-pyrrole-2-carbonyl)-[peptidyl-carrier protein] + bromide + FADH2 + O2 = (5-bromo-1H-pyrrole-2-carbonyl)-[peptidyl-carrier protein] + FAD + 2 H2O. The enzyme catalyses (5-bromo-1H-pyrrole-2-carbonyl)-[peptidyl-carrier protein] + bromide + FADH2 + O2 = (4,5-dibromo-1H-pyrrole-2-carbonyl)-[peptidyl-carrier protein] + FAD + 2 H2O. It catalyses the reaction (4,5-dibromo-1H-pyrrole-2-carbonyl)-[peptidyl-carrier protein] + bromide + FADH2 + O2 = (3,4,5-tribromo-1H-pyrrole-2-carbonyl)-[peptidyl-carrier protein] + FAD + 2 H2O. Its function is as follows. Brominase involved in the biosynthesis of polybrominated aromatic organic compounds. Catalyzes three successive rounds of bromination of pyrrolyl-S-Bmp1 to produce mono-, di- and tribromopyrrolyl-S-Bmp1. In Pseudoalteromonas luteoviolacea (strain 2ta16), this protein is 1H-pyrrole-2-carbonyl-[peptidyl-carrier protein] brominase.